The sequence spans 732 residues: Polyribonucleotide nucleotidyltransferase (732 aa).

Mg(2+) is bound by residues Asp-515 and Asp-521. Residues 581 to 641 (PKLELFNVDP…KNVDAAKDYI (61 aa)) form the KH domain. Residues 672–731 (GDEFTGSVKSVVDFGVFIELKDGVDGLLHISKIKSPLNVGDQVKVCVSEQKGNKISLSLV) enclose the S1 motif domain.

Belongs to the polyribonucleotide nucleotidyltransferase family. It depends on Mg(2+) as a cofactor.

It localises to the cytoplasm. The enzyme catalyses RNA(n+1) + phosphate = RNA(n) + a ribonucleoside 5'-diphosphate. In terms of biological role, involved in mRNA degradation. Catalyzes the phosphorolysis of single-stranded polyribonucleotides processively in the 3'- to 5'-direction. This chain is Polyribonucleotide nucleotidyltransferase, found in Campylobacter concisus (strain 13826).